A 170-amino-acid chain; its full sequence is Adenine phosphoribosyltransferase (170 aa).

The protein belongs to the purine/pyrimidine phosphoribosyltransferase family. As to quaternary structure, homodimer.

The protein localises to the cytoplasm. It carries out the reaction AMP + diphosphate = 5-phospho-alpha-D-ribose 1-diphosphate + adenine. It functions in the pathway purine metabolism; AMP biosynthesis via salvage pathway; AMP from adenine: step 1/1. Catalyzes a salvage reaction resulting in the formation of AMP, that is energically less costly than de novo synthesis. The polypeptide is Adenine phosphoribosyltransferase (Cyanothece sp. (strain PCC 7425 / ATCC 29141)).